A 224-amino-acid polypeptide reads, in one-letter code: Envelope glycoprotein L (224 aa).

The signal sequence occupies residues 1–22 (MGILGWVGLIAVGVLCVRGGLS). The segment at 20–161 (GLSSTEYVIR…FDYSRTRRCV (142 aa)) is interaction with gH. The interaction with gL stretch occupies residues 20–161 (GLSSTEYVIR…FDYSRTRRCV (142 aa)). Residues 23–201 (STEYVIRSRV…LTTPPPIIAT (179 aa)) enclose the gL alphaherpesvirus-type domain. Disulfide bonds link Cys-44–Cys-76 and Cys-149–Cys-160. The interval 161–224 (VGRQDLGPTN…RRRRPHSRRL (64 aa)) is disordered. An N-linked (GlcNAc...) asparagine; by host glycan is attached at Asn-170. Residues 213–224 (KSRRRRPHSRRL) are compositionally biased toward basic residues.

The protein belongs to the herpesviridae glycoprotein L (gL) family. Alphaherpesvirinae gL subfamily. Interacts with glycoprotein H (gH); this interaction is necessary for the correct processing and cell surface expression of gH. The heterodimer gH/gL seems to interact with gB trimers during fusion. Post-translationally, N-glycosylated, O-glycosylated, and sialylated.

The protein resides in the virion membrane. Its subcellular location is the host cell membrane. It localises to the host Golgi apparatus. It is found in the host trans-Golgi network. Its function is as follows. The heterodimer glycoprotein H-glycoprotein L is required for the fusion of viral and plasma membranes leading to virus entry into the host cell. Acts as a functional inhibitor of gH and maintains gH in an inhibited form. Upon binding to host integrins, gL dissociates from gH leading to activation of the viral fusion glycoproteins gB and gH. The chain is Envelope glycoprotein L from Human herpesvirus 1 (strain KOS) (HHV-1).